The sequence spans 149 residues: UPF0260 protein PFLU_1520 (149 aa).

Belongs to the UPF0260 family.

In Pseudomonas fluorescens (strain SBW25), this protein is UPF0260 protein PFLU_1520.